The following is a 2090-amino-acid chain: Nuclear pore complex protein Nup214 (2090 aa).

G2 carries the post-translational modification N-acetylglycine. A Phosphoserine modification is found at S30. Blade repeat units follow at residues 41 to 93 (LLAV…PMKF), 94 to 150 (PIHH…DAGG), 151 to 193 (MVID…PSTV), 194 to 239 (AVTS…ESDH), 240 to 303 (PVRV…ERQH), 304 to 359 (HYYL…KSDD), and 360 to 404 (SLPM…FYMI). The interval 41-404 (LLAVSNKYGL…DGVLCPFYMI (364 aa)) is seven-bladed beta propeller. The 44 X 2 AA repeats of F-G stretch occupies residues 236–1418 (ESDHPVRVLD…AVFGSLPVTS (1183 aa)). Position 416 is a phosphothreonine (T416). Residues S421, S430, and S433 each carry the phosphoserine modification. Residues 422–460 (LEGERQPKSPGSTPTTPTSSQAPQKLDASAAAAPASLPP) form a disordered region. Residues 429-441 (KSPGSTPTTPTSS) show a composition bias toward low complexity. 3 positions are modified to phosphothreonine: T434, T437, and T439. The segment at 450–586 (SAAAAPASLP…PPSTSAVKVN (137 aa)) is (Microbial infection) Binds human adenovirus 5 (HAdV-5) protein L3 (hexon). Residues 481–2076 (VFSFGSSSLK…GSGTGGFSFG (1596 aa)) form an 11 X 5 AA approximate repeats region. Copy 1 of the repeat occupies 484-485 (FG). 2 stretches are compositionally biased toward low complexity: residues 489–513 (LKSSATVTGEPPSYSSGSDSSKAAP) and 524–536 (PPSKASLAPTPAA). The interval 489 to 536 (LKSSATVTGEPPSYSSGSDSSKAAPGPGPSTFSFVPPSKASLAPTPAA) is disordered. Repeat 2 spans residues 548–549 (FG). 2 stretches are compositionally biased toward low complexity: residues 597 to 629 (STPVSSSQSAPPMSPFSSASKPAASGPLSHPTP) and 637 to 658 (VPLKSSVLPSPSGRSAQGSSSP). The interval 597–700 (STPVSSSQSA…KQGHQWKDSD (104 aa)) is disordered. 3 positions are modified to phosphoserine: S651, S657, and S666. Phosphothreonine is present on T670. Position 678 is a phosphoserine (S678). A coiled-coil region spans residues 680–1209 (QAKSLQPAVA…VTSTPSASGQ (530 aa)). Residues 691–700 (KQGHQWKDSD) are compositionally biased toward basic and acidic residues. 2 leucine-zipper regions span residues 740–768 (LRTESDDLHTFLLEIKETTESLHGDISSL) and 861–882 (LANNREIINQQRKRLNHLVDSL). S760 is subject to Phosphoserine. Phosphoserine is present on residues S940, S970, S974, and S989. The disordered stretch occupies residues 987–1009 (TSSVSQSLESEDARTSCKDDEAV). Basic and acidic residues predominate over residues 997 to 1007 (EDARTSCKDDE). At T1021 the chain carries Phosphothreonine. Phosphoserine is present on residues S1023, S1045, S1056, and S1081. Polar residues predominate over residues 1128 to 1149 (LKNNPATPSTAMGSSVPYSTAK). The segment at 1128-1152 (LKNNPATPSTAMGSSVPYSTAKTPH) is disordered. T1134, T1150, and T1156 each carry phosphothreonine. Polar residues-rich tracts occupy residues 1168–1188 (LINSLKPSGPTPASGQLSSGD) and 1199–1213 (AVTSTPSASGQFSKP). Residues 1168 to 1213 (LINSLKPSGPTPASGQLSSGDKASGTAKIETAVTSTPSASGQFSKP) are disordered. At S1181 the chain carries Phosphoserine. Repeat unit 3 spans residues 1225 to 1226 (FG). Polar residues-rich tracts occupy residues 1234–1254 (SNFTAAQGATPSTKESSQPDA) and 1273–1285 (PPSGITSASNTTP). Disordered stretches follow at residues 1234–1316 (SNFT…PPSK) and 1337–1408 (LRVG…TSST). Low complexity predominate over residues 1288-1299 (PAASSSRPVAPS). The span at 1301–1310 (TALSTTSSKL) shows a compositional bias: polar residues. Residue T1312 is modified to Phosphothreonine. A compositionally biased stretch (polar residues) spans 1347 to 1368 (KPTNKASSTSLTSTQPTKTSGV). S1353 is subject to Phosphoserine. A compositionally biased stretch (low complexity) spans 1386–1408 (PPVTSSATTTSVAPPAATSTSST). Residues 1409-2084 (AVFGSLPVTS…FGSNNSSVQG (676 aa)) are 18 X 4 AA approximate repeats. Repeat copies occupy residues 1411–1412 (FG), 1427–1428 (FG), 1441–1442 (FG), and 1473–1474 (FG). The segment at 1427–2085 (FGGTSLSAGK…GSNNSSVQGF (659 aa)) is 11 X 3 AA approximate repeats. A compositionally biased stretch (polar residues) spans 1438–1450 (SFSFGSQQTNSTV). Residues 1438–1467 (SFSFGSQQTNSTVPPSAPPPTTAATPLPTS) are disordered. Composition is skewed to low complexity over residues 1479 to 1489 (SATTPSLPMSA) and 1508 to 1527 (SEVSASAASLLEEQQSAQLP). The segment at 1479–1539 (SATTPSLPMS…PPQTSDSVKK (61 aa)) is disordered. Residue K1538 forms a Glycyl lysine isopeptide (Lys-Gly) (interchain with G-Cter in SUMO2) linkage. Tandem repeats lie at residues 1635 to 1636 (FG), 1674 to 1675 (FG), 1686 to 1687 (FG), 1713 to 1714 (FG), 1721 to 1722 (FG), 1726 to 1727 (FG), 1732 to 1733 (FG), 1756 to 1757 (FG), 1772 to 1773 (FG), 1786 to 1787 (FG), 1798 to 1799 (FG), 1806 to 1807 (FG), 1812 to 1813 (FG), 1819 to 1820 (FG), 1842 to 1843 (FG), 1851 to 1852 (FG), 1862 to 1863 (FG), and 1874 to 1875 (FG). Residues 1884 to 1903 (GFFSGLGGKPSQDAANKNPF) are disordered. A run of 5 repeats spans residues 1910–1911 (FG), 1922–1923 (FG), 1930–1931 (FG), 1938–1939 (FG), and 1959–1960 (FG). S1963 bears the Phosphoserine mark. 3 consecutive repeat copies span residues 1970 to 1971 (FG), 1976 to 1977 (FG), and 1982 to 1983 (FG). Residue S1985 is modified to Phosphoserine. 11 repeat units span residues 1988–1989 (FG), 1994–1995 (FG), 2012–2013 (FG), 2024–2025 (FG), 2026–2027 (FG), 2035–2036 (FG), 2046–2047 (FG), 2056–2057 (FG), 2066–2067 (FG), 2075–2076 (FG), and 2085–2086 (FG).

In terms of assembly, homodimer. Part of the nuclear pore complex (NPC). Interacts with NUP88. Interacts with ZFP36; this interaction increases upon lipopolysaccharide (LPS) stimulation. Interacts with DDX19. Interacts with XPO1. Interacts with XPO5. (Microbial infection) Interacts with human herpes virus 1 (HHV-1) protein UL25; this interaction might be essential to the capsid docking onto the host nuclear pore. As to quaternary structure, (Microbial infection) Interacts (via N-terminus) with human adenovirus 5 (HAdV-5) protein L3 (hexon); this interaction might be essential for the release of the virus genome to the nucleus. Probably glycosylated as it reacts with wheat germ agglutinin (WGA). Expressed in thymus, spleen, bone marrow, kidney, brain and testis, but hardly in all other tissues or in whole embryos during development.

It is found in the nucleus. Its subcellular location is the nuclear pore complex. Its function is as follows. Part of the nuclear pore complex. Has a critical role in nucleocytoplasmic transport. May serve as a docking site in the receptor-mediated import of substrates across the nuclear pore complex. Functionally, (Microbial infection) Required for capsid disassembly of the human adenovirus 5 (HadV-5) leading to release of the viral genome to the nucleus (in vitro). The sequence is that of Nuclear pore complex protein Nup214 (NUP214) from Homo sapiens (Human).